A 185-amino-acid polypeptide reads, in one-letter code: GTP cyclohydrolase 1 (185 aa).

Residues cysteine 76, histidine 79, and cysteine 147 each coordinate Zn(2+).

It belongs to the GTP cyclohydrolase I family. Toroid-shaped homodecamer, composed of two pentamers of five dimers.

It catalyses the reaction GTP + H2O = 7,8-dihydroneopterin 3'-triphosphate + formate + H(+). Its pathway is cofactor biosynthesis; 7,8-dihydroneopterin triphosphate biosynthesis; 7,8-dihydroneopterin triphosphate from GTP: step 1/1. This chain is GTP cyclohydrolase 1, found in Clostridium perfringens (strain ATCC 13124 / DSM 756 / JCM 1290 / NCIMB 6125 / NCTC 8237 / Type A).